Here is a 50-residue protein sequence, read N- to C-terminus: Conotoxin Bu13 (50 aa).

A1 is a signal peptide. Residues 2-24 (EDSRGTQLHRALRKTTKLSLSIR) constitute a propeptide that is removed on maturation. Cystine bridges form between C25-C40, C32-C44, and C39-C49.

This sequence belongs to the conotoxin O1 superfamily. In terms of tissue distribution, expressed by the venom duct.

It localises to the secreted. This Conus bullatus (Bubble cone) protein is Conotoxin Bu13.